The following is a 94-amino-acid chain: Small ribosomal subunit protein bS18 (94 aa).

Belongs to the bacterial ribosomal protein bS18 family. In terms of assembly, part of the 30S ribosomal subunit. Forms a tight heterodimer with protein bS6.

In terms of biological role, binds as a heterodimer with protein bS6 to the central domain of the 16S rRNA, where it helps stabilize the platform of the 30S subunit. The chain is Small ribosomal subunit protein bS18 from Acetivibrio thermocellus (strain ATCC 27405 / DSM 1237 / JCM 9322 / NBRC 103400 / NCIMB 10682 / NRRL B-4536 / VPI 7372) (Clostridium thermocellum).